The following is a 567-amino-acid chain: uncharacterized protein (567 aa).

The interval 1 to 26 is disordered; sequence MPSEKATTRHLPGAVETLSPRTGRRP. Transmembrane regions (helical) follow at residues 57 to 77, 90 to 110, 142 to 162, 173 to 193, 221 to 241, and 257 to 277; these read AILV…TVAF, VSFG…TYWL, VALA…IIYG, LFSM…LTEF, MLVW…TAIF, and VLIL…ILAW. The HAMP domain occupies 278-329; the sequence is LTATPVRVVREALNRVEQGDLSGDLVVFDGTELGELQRGFNRMVEGLRERER. The Guanylate cyclase domain maps to 361-485; it reads AVVFVDIVGS…EPVNEAARLC (125 aa).

It belongs to the adenylyl cyclase class-3 family.

The protein localises to the cell membrane. This is an uncharacterized protein from Mycobacterium tuberculosis (strain ATCC 25618 / H37Rv).